A 245-amino-acid chain; its full sequence is tRNA (guanine-N(1)-)-methyltransferase (245 aa).

Residues G111 and I130 to L135 contribute to the S-adenosyl-L-methionine site.

Belongs to the RNA methyltransferase TrmD family. In terms of assembly, homodimer.

Its subcellular location is the cytoplasm. It catalyses the reaction guanosine(37) in tRNA + S-adenosyl-L-methionine = N(1)-methylguanosine(37) in tRNA + S-adenosyl-L-homocysteine + H(+). Specifically methylates guanosine-37 in various tRNAs. The protein is tRNA (guanine-N(1)-)-methyltransferase of Dictyoglomus turgidum (strain DSM 6724 / Z-1310).